The sequence spans 451 residues: Enolase (451 aa).

Glutamine 167 contacts (2R)-2-phosphoglycerate. Glutamate 209 serves as the catalytic Proton donor. The Mg(2+) site is built by aspartate 250, glutamate 307, and aspartate 334. Residues lysine 359, arginine 388, serine 389, and lysine 410 each coordinate (2R)-2-phosphoglycerate. Lysine 359 serves as the catalytic Proton acceptor.

The protein belongs to the enolase family. Mg(2+) serves as cofactor.

The protein resides in the cytoplasm. The protein localises to the secreted. Its subcellular location is the cell surface. The enzyme catalyses (2R)-2-phosphoglycerate = phosphoenolpyruvate + H2O. Its pathway is carbohydrate degradation; glycolysis; pyruvate from D-glyceraldehyde 3-phosphate: step 4/5. Functionally, catalyzes the reversible conversion of 2-phosphoglycerate (2-PG) into phosphoenolpyruvate (PEP). It is essential for the degradation of carbohydrates via glycolysis. In Mesomycoplasma hyopneumoniae (strain J / ATCC 25934 / NCTC 10110) (Mycoplasma hyopneumoniae), this protein is Enolase.